Here is a 541-residue protein sequence, read N- to C-terminus: Glutamyl-tRNA(Gln) amidotransferase subunit B, mitochondrial (541 aa).

Belongs to the GatB/GatE family. GatB subfamily. In terms of assembly, subunit of the heterotrimeric GatFAB amidotransferase (AdT) complex, composed of A, B and F subunits.

It is found in the mitochondrion. It carries out the reaction L-glutamyl-tRNA(Gln) + L-glutamine + ATP + H2O = L-glutaminyl-tRNA(Gln) + L-glutamate + ADP + phosphate + H(+). Allows the formation of correctly charged Gln-tRNA(Gln) through the transamidation of misacylated Glu-tRNA(Gln) in the mitochondria. The reaction takes place in the presence of glutamine and ATP through an activated gamma-phospho-Glu-tRNA(Gln). The chain is Glutamyl-tRNA(Gln) amidotransferase subunit B, mitochondrial from Saccharomyces cerevisiae (strain YJM789) (Baker's yeast).